The chain runs to 470 residues: Putative gustatory receptor 28b (470 aa).

Topologically, residues 1–76 (MDIEMAKEPV…KTGKKAIKKT (76 aa)) are cytoplasmic. The chain crosses the membrane as a helical span at residues 77–97 (IFGYINGIMHIAMFVFAYSLT). Over 98–119 (IYNNCESVASYFFRSRITYFGD) the chain is Extracellular. A helical membrane pass occupies residues 120–140 (LMQIVSGFIGVTVIYLTAFVP). Topologically, residues 141–175 (NHRLERCLQKFHTMDVQLQTVGVKIMYSKVLRFSY) are cytoplasmic. A helical membrane pass occupies residues 176 to 196 (MVLISMFLVNVLFTGGTFSVL). At 197 to 204 (YSSEVAPT) the chain is on the extracellular side. A helical transmembrane segment spans residues 205–225 (MALHFTFLIQHTVIAIAIALF). Topologically, residues 226–309 (SCFTYLVEMR…ATANKYFTYQ (84 aa)) are cytoplasmic. Residues 310 to 330 (LLTIISIAFLIIVFDAYYVLE) traverse the membrane as a helical segment. The Extracellular portion of the chain corresponds to 331 to 346 (TLLGKSKRESKFKTVE). The helical transmembrane segment at 347–367 (FVTFFSCQMILYLIAIISIVE) threads the bilayer. The Cytoplasmic portion of the chain corresponds to 368-423 (GSNRAIKKSEKTGGIVHSLLNKTKSAEVKEKLQQFSMQLMHLKINFTAAGLFNIDR). Residues 424–444 (TLYFTISGALTTYLIILLQFT) traverse the membrane as a helical segment. Residues 445-470 (SNSPNNGYGNGSSCCETFNNMTNHTL) are Extracellular-facing. N-linked (GlcNAc...) asparagine glycans are attached at residues Asn-454, Asn-464, and Asn-467.

It belongs to the insect chemoreceptor superfamily. Gustatory receptor (GR) family. Gr66a subfamily. As to expression, isoforms A and E have taste neuron-specific expression restricted to the labial palps, the internal taste organs in the pharynx, and the legs. In addition to expression in a large number of taste neurons, isoform A is also expressed in a few nonchemosensory neurons, including the campaniform sensilla of the wing, leg stretch receptors, and multiple dendritic neurons in the abdomen. Isoform B is the only receptor not expressed in gustatory receptor neurons in the labellum. We observe expression of this receptor in a single large cell at the base of each maxillary palp, in campaniform sensilla of the wing, and multiple dendritic neurons in the abdomen. Isoform C is expressed by many gustatory receptor neurons in the labial palps, the pharyngeal taste clusters, and taste neurons in the legs. In addition, isoform C expressed in a single cell at the base of the maxillary palps, neurons in the Johnston's organ (JO), campaniform sensilla of the wing, stretch receptors and the femoral chordotonal organ of the legs, and multiple dendritic neurons in the abdomen. Isoform D is expressed in a small number of gustatory receptor neurons in the labial palps, the ventral cibarial sense organ (VCSO), and legs. Atypical expression is observed in three neurons in the arista, campaniform sensilla of the wing, stretch and femoral chordotonal organ receptors in the legs, and multiple dendritic neurons in the abdomen. In larvae, Isoform A is expressed in neurons of the terminal external chemosensory organ and the dorsal external chemosensory organ; and isoform E is expressed in neurons of the terminal external chemosensory organ.

The protein localises to the cell membrane. In terms of biological role, probable gustatory receptor which mediates acceptance or avoidance behavior, depending on its substrates. Atypical expression also suggests nongustatory roles in the nervous system and tissues involved in proprioception, hygroreception, and other sensory modalities. It is also possible that it has chemosensory roles in the detection of internal ligands. The sequence is that of Putative gustatory receptor 28b (Gr28b) from Drosophila melanogaster (Fruit fly).